Consider the following 147-residue polypeptide: D-aminoacyl-tRNA deacylase (147 aa).

Residues 137 to 138 carry the Gly-cisPro motif, important for rejection of L-amino acids motif; it reads GP.

The protein belongs to the DTD family. In terms of assembly, homodimer.

The protein localises to the cytoplasm. It catalyses the reaction glycyl-tRNA(Ala) + H2O = tRNA(Ala) + glycine + H(+). It carries out the reaction a D-aminoacyl-tRNA + H2O = a tRNA + a D-alpha-amino acid + H(+). In terms of biological role, an aminoacyl-tRNA editing enzyme that deacylates mischarged D-aminoacyl-tRNAs. Also deacylates mischarged glycyl-tRNA(Ala), protecting cells against glycine mischarging by AlaRS. Acts via tRNA-based rather than protein-based catalysis; rejects L-amino acids rather than detecting D-amino acids in the active site. By recycling D-aminoacyl-tRNA to D-amino acids and free tRNA molecules, this enzyme counteracts the toxicity associated with the formation of D-aminoacyl-tRNA entities in vivo and helps enforce protein L-homochirality. This chain is D-aminoacyl-tRNA deacylase, found in Bacillus velezensis (strain DSM 23117 / BGSC 10A6 / LMG 26770 / FZB42) (Bacillus amyloliquefaciens subsp. plantarum).